The chain runs to 217 residues: Uracil-DNA glycosylase (217 aa).

Asp-62 functions as the Proton acceptor in the catalytic mechanism.

This sequence belongs to the uracil-DNA glycosylase (UDG) superfamily. UNG family.

Its subcellular location is the cytoplasm. The enzyme catalyses Hydrolyzes single-stranded DNA or mismatched double-stranded DNA and polynucleotides, releasing free uracil.. In terms of biological role, excises uracil residues from the DNA which can arise as a result of misincorporation of dUMP residues by DNA polymerase or due to deamination of cytosine. The chain is Uracil-DNA glycosylase from Streptococcus mutans serotype c (strain ATCC 700610 / UA159).